Consider the following 248-residue polypeptide: Protein-lysine N-methyltransferase EFM5 (248 aa).

This sequence belongs to the class I-like SAM-binding methyltransferase superfamily. EFM5 family.

The protein resides in the cytoplasm. S-adenosyl-L-methionine-dependent protein-lysine N-methyltransferase that trimethylates elongation factor 1-alpha (TEF1 and TEF2) at 'Lys-79'. Required for replication of Brome mosaic virus (BMV). The protein is Protein-lysine N-methyltransferase EFM5 of Saccharomyces cerevisiae (strain ATCC 204508 / S288c) (Baker's yeast).